The chain runs to 158 residues: Phosphopantetheine adenylyltransferase (158 aa).

S8 is a substrate binding site. ATP contacts are provided by residues 8 to 9 (SF) and H16. 3 residues coordinate substrate: K40, T72, and R86. ATP is bound by residues 87-89 (GLR), E97, and 122-128 (HSFLSSS).

The protein belongs to the bacterial CoaD family. Homohexamer. It depends on Mg(2+) as a cofactor.

The protein resides in the cytoplasm. It catalyses the reaction (R)-4'-phosphopantetheine + ATP + H(+) = 3'-dephospho-CoA + diphosphate. It functions in the pathway cofactor biosynthesis; coenzyme A biosynthesis; CoA from (R)-pantothenate: step 4/5. In terms of biological role, reversibly transfers an adenylyl group from ATP to 4'-phosphopantetheine, yielding dephospho-CoA (dPCoA) and pyrophosphate. This Prochlorococcus marinus (strain NATL1A) protein is Phosphopantetheine adenylyltransferase.